Consider the following 360-residue polypeptide: Phenylalanine--tRNA ligase alpha subunit (360 aa).

Position 260 (Glu260) interacts with Mg(2+).

The protein belongs to the class-II aminoacyl-tRNA synthetase family. Phe-tRNA synthetase alpha subunit type 1 subfamily. In terms of assembly, tetramer of two alpha and two beta subunits. Mg(2+) is required as a cofactor.

Its subcellular location is the cytoplasm. The enzyme catalyses tRNA(Phe) + L-phenylalanine + ATP = L-phenylalanyl-tRNA(Phe) + AMP + diphosphate + H(+). This chain is Phenylalanine--tRNA ligase alpha subunit, found in Rhizobium etli (strain CIAT 652).